A 490-amino-acid chain; its full sequence is GTPase Der (490 aa).

EngA-type G domains are found at residues 3–166 (PVVA…MDDV) and 203–376 (IKLA…DSST). Residues 9-16 (GRPNVGKS), 56-60 (DTGGI), 118-121 (NKTD), 209-216 (GRPNVGKS), 256-260 (DTAGV), and 321-324 (NKWD) contribute to the GTP site. Residues 377-461 (RRVSTAMLTR…PIRIQFKEGE (85 aa)) form the KH-like domain.

The protein belongs to the TRAFAC class TrmE-Era-EngA-EngB-Septin-like GTPase superfamily. EngA (Der) GTPase family. As to quaternary structure, associates with the 50S ribosomal subunit.

Its function is as follows. GTPase that plays an essential role in the late steps of ribosome biogenesis. In Citrobacter koseri (strain ATCC BAA-895 / CDC 4225-83 / SGSC4696), this protein is GTPase Der.